We begin with the raw amino-acid sequence, 96 residues long: Uteroglobin (96 aa).

Positions 1–19 are cleaved as a signal peptide; that stretch reads MKIAITITVLMLSICCSSA.

This sequence belongs to the secretoglobin family. As to quaternary structure, antiparallel homodimer; disulfide-linked. Interaction with LMBR1L is controversial. As to expression, club cells (nonciliated cells of the surface epithelium of the pulmonary airways).

The protein localises to the secreted. Binds phosphatidylcholine, phosphatidylinositol, polychlorinated biphenyls (PCB) and weakly progesterone, potent inhibitor of phospholipase A2. The chain is Uteroglobin (Scgb1a1) from Rattus norvegicus (Rat).